A 659-amino-acid polypeptide reads, in one-letter code: Acetyl-coenzyme A synthetase (659 aa).

The interval 1–35 (MATEQTKGQSSESISSVLSERRKFPPPEAFSSQSH) is disordered. Residues 205 to 208 (RRGS), Thr-323, and Asn-347 contribute to the CoA site. ATP-binding positions include 399 to 401 (GEP), 423 to 428 (DTWWQT), Asp-512, and Arg-527. CoA is bound at residue Ser-535. Position 538 (Arg-538) interacts with ATP. Residues Val-549, His-551, and Val-554 each contribute to the Mg(2+) site. At Lys-621 the chain carries N6-acetyllysine.

The protein belongs to the ATP-dependent AMP-binding enzyme family. It depends on Mg(2+) as a cofactor. Post-translationally, acetylated. Deacetylation by the SIR2-homolog deacetylase activates the enzyme.

It carries out the reaction acetate + ATP + CoA = acetyl-CoA + AMP + diphosphate. In terms of biological role, catalyzes the conversion of acetate into acetyl-CoA (AcCoA), an essential intermediate at the junction of anabolic and catabolic pathways. AcsA undergoes a two-step reaction. In the first half reaction, AcsA combines acetate with ATP to form acetyl-adenylate (AcAMP) intermediate. In the second half reaction, it can then transfer the acetyl group from AcAMP to the sulfhydryl group of CoA, forming the product AcCoA. The protein is Acetyl-coenzyme A synthetase of Chlorobaculum tepidum (strain ATCC 49652 / DSM 12025 / NBRC 103806 / TLS) (Chlorobium tepidum).